Here is a 1132-residue protein sequence, read N- to C-terminus: Sentrin-specific protease 6 (1132 aa).

2 disordered regions span residues Ser-23–Asn-51 and Leu-327–Thr-388. Phosphoserine occurs at positions 41, 355, 356, 371, and 373. Phosphothreonine is present on Thr-436. A Glycyl lysine isopeptide (Lys-Gly) (interchain with G-Cter in SUMO2) cross-link involves residue Lys-648. Residues Ile-686–Glu-1132 form a protease region. Residues His-785 and Asp-936 contribute to the active site. Ser-938 bears the Phosphoserine mark. Residue Cys-1049 is part of the active site. Position 1131 is a phosphoserine (Ser-1131).

The protein belongs to the peptidase C48 family. In terms of assembly, interacts with RXRA. Forms a complex with KAT5-TIP60 and UBE2I in response to UV irradiation. Interacts with RPA1 to maintain it in hyposumoylated state during S phase preventing DNA repair initiation.

The protein resides in the nucleus. Its pathway is protein modification; protein sumoylation. Protease that deconjugates SUMO1, SUMO2 and SUMO3 from targeted proteins. Processes preferentially poly-SUMO2 and poly-SUMO3 chains, but does not efficiently process SUMO1, SUMO2 and SUMO3 precursors. Deconjugates SUMO1 from RXRA, leading to transcriptional activation. Involved in chromosome alignment and spindle assembly, by regulating the kinetochore CENPH-CENPI-CENPK complex. Desumoylates PML and CENPI, protecting them from degradation by the ubiquitin ligase RNF4, which targets polysumoylated proteins for proteasomal degradation. Also desumoylates RPA1, thus preventing recruitment of RAD51 to the DNA damage foci to initiate DNA repair through homologous recombination. The polypeptide is Sentrin-specific protease 6 (Senp6) (Mus musculus (Mouse)).